The sequence spans 234 residues: MEFSPPLQRATLIQRYKRFLADVITPDGRELTLHCPNTGAMTGCATPGDTVWYSTSDNTKRKYPHTWELTQSQSGAFICVNTLWANRLTKEAILNESISELSGYSSLKSEVKYGSERSRIDFMLQADSRPDCYIEVKSVTLAENEQGYFPDAVTERGQKHLRELMSVAAEGQRAVIFFAVLHSAITRFSPARHIDEKYAQLLSEAQQRGVEILAYKAEISAEGMALKKSLPVTL.

The H-T-H motif DNA-binding region spans 201-220 (LLSEAQQRGVEILAYKAEIS).

The protein belongs to the SfsA family.

In terms of biological role, binds to DNA non-specifically. Could be a regulatory factor involved in maltose metabolism. The sequence is that of Sugar fermentation stimulation protein A from Shigella flexneri.